A 307-amino-acid polypeptide reads, in one-letter code: Small ribosomal subunit biogenesis GTPase RsgA (307 aa).

The segment at 1–21 is disordered; the sequence is MPSEHPFSDGISTPNPKETMN. The span at 10–21 shows a compositional bias: polar residues; the sequence is GISTPNPKETMN. A CP-type G domain is found at 85-242; that stretch reads RQDAWKTKLI…LIDSPGLQEF (158 aa). GTP is bound by residues 135–138 and 184–192; these read NKAD and GQSGMGKST. Residues Cys266, Cys271, His273, and Cys279 each contribute to the Zn(2+) site.

It belongs to the TRAFAC class YlqF/YawG GTPase family. RsgA subfamily. In terms of assembly, monomer. Associates with 30S ribosomal subunit, binds 16S rRNA. Zn(2+) is required as a cofactor.

The protein resides in the cytoplasm. One of several proteins that assist in the late maturation steps of the functional core of the 30S ribosomal subunit. Helps release RbfA from mature subunits. May play a role in the assembly of ribosomal proteins into the subunit. Circularly permuted GTPase that catalyzes slow GTP hydrolysis, GTPase activity is stimulated by the 30S ribosomal subunit. The sequence is that of Small ribosomal subunit biogenesis GTPase RsgA from Neisseria gonorrhoeae (strain NCCP11945).